The sequence spans 119 residues: Large ribosomal subunit protein bL12 (119 aa).

Belongs to the bacterial ribosomal protein bL12 family. Homodimer. Part of the ribosomal stalk of the 50S ribosomal subunit. Forms a multimeric L10(L12)X complex, where L10 forms an elongated spine to which 2 to 4 L12 dimers bind in a sequential fashion. Binds GTP-bound translation factors.

Its function is as follows. Forms part of the ribosomal stalk which helps the ribosome interact with GTP-bound translation factors. Is thus essential for accurate translation. This is Large ribosomal subunit protein bL12 from Bacillus cytotoxicus (strain DSM 22905 / CIP 110041 / 391-98 / NVH 391-98).